The following is a 95-amino-acid chain: Protein TusB (95 aa).

Belongs to the DsrH/TusB family. Heterohexamer, formed by a dimer of trimers. The hexameric TusBCD complex contains 2 copies each of TusB, TusC and TusD. The TusBCD complex interacts with TusE.

The protein resides in the cytoplasm. Part of a sulfur-relay system required for 2-thiolation of 5-methylaminomethyl-2-thiouridine (mnm(5)s(2)U) at tRNA wobble positions. The chain is Protein TusB from Pectobacterium atrosepticum (strain SCRI 1043 / ATCC BAA-672) (Erwinia carotovora subsp. atroseptica).